The sequence spans 31 residues: MLTITSYFGFLLVALTITSALFIGLSKIRLI.

A helical transmembrane segment spans residues 4–24 (ITSYFGFLLVALTITSALFIG).

It belongs to the PetL family. In terms of assembly, the 4 large subunits of the cytochrome b6-f complex are cytochrome b6, subunit IV (17 kDa polypeptide, PetD), cytochrome f and the Rieske protein, while the 4 small subunits are PetG, PetL, PetM and PetN. The complex functions as a dimer.

It is found in the plastid. The protein resides in the chloroplast thylakoid membrane. Functionally, component of the cytochrome b6-f complex, which mediates electron transfer between photosystem II (PSII) and photosystem I (PSI), cyclic electron flow around PSI, and state transitions. PetL is important for photoautotrophic growth as well as for electron transfer efficiency and stability of the cytochrome b6-f complex. The polypeptide is Cytochrome b6-f complex subunit 6 (Pelargonium hortorum (Common geranium)).